A 431-amino-acid chain; its full sequence is Serine hydroxymethyltransferase (431 aa).

Residues leucine 128 and 132–134 contribute to the (6S)-5,6,7,8-tetrahydrofolate site; that span reads GHL. Lysine 237 bears the N6-(pyridoxal phosphate)lysine mark.

Belongs to the SHMT family. As to quaternary structure, homodimer. It depends on pyridoxal 5'-phosphate as a cofactor.

Its subcellular location is the cytoplasm. The catalysed reaction is (6R)-5,10-methylene-5,6,7,8-tetrahydrofolate + glycine + H2O = (6S)-5,6,7,8-tetrahydrofolate + L-serine. It functions in the pathway one-carbon metabolism; tetrahydrofolate interconversion. The protein operates within amino-acid biosynthesis; glycine biosynthesis; glycine from L-serine: step 1/1. In terms of biological role, catalyzes the reversible interconversion of serine and glycine with tetrahydrofolate (THF) serving as the one-carbon carrier. This reaction serves as the major source of one-carbon groups required for the biosynthesis of purines, thymidylate, methionine, and other important biomolecules. Also exhibits THF-independent aldolase activity toward beta-hydroxyamino acids, producing glycine and aldehydes, via a retro-aldol mechanism. The protein is Serine hydroxymethyltransferase of Ruegeria sp. (strain TM1040) (Silicibacter sp.).